An 895-amino-acid polypeptide reads, in one-letter code: ABC-transporter-regulating transcription factor (895 aa).

The segment at residues 69 to 96 is a DNA-binding region (zn(2)-C6 fungal-type); it reads CDMCRKKKIKCDGKMPKCSHCTNYKTDC. Residues 156 to 218 are disordered; the sequence is HASGSNTPHN…QKESETEVEG (63 aa). The segment covering 158 to 207 has biased composition (polar residues); sequence SGSNTPHNPQKINIPSQSQIAMSQQNSSSHYSTPRLESQSSPRTAATSPE. Residues 648-668 traverse the membrane as a helical segment; it reads CVWLILYYPVSALVTLFANIL. Positions 726–813 are disordered; it reads ESYSKKKRKS…TGVSTNIPPN (88 aa). Positions 755 to 765 are enriched in low complexity; it reads PSTTQPTQAPS.

In terms of assembly, interacts with ncaA.

The protein resides in the nucleus. The protein localises to the membrane. Its function is as follows. Transcription factor that regulates expression of the genes related to ergosterol biosynthesis, including erg3B, erg24A, erg25A, as well as cyp51A that encodes a target protein of azoles. In coordination with ffmA and ncaA, is responsible for the expression of the ABC transporter abcC/cdr1B/abcG1 related to azole resistance. Directly binds both the cyp51A and abcC/cdr1B/abcG1 promoters at a conserved 34 bp region called the atrR response element (ATRE). AtrR also binds to the promoter regions of both the sterol response transcription factor srbA and atrR genes themselves, the latter suggesting the possibility that atrR is autoregulated. Also regulates iron uptake, most likely via cooperation with SrbA. AtrR is necessary for hypoxia adaptation and virulence. This chain is ABC-transporter-regulating transcription factor, found in Aspergillus fumigatus (strain ATCC MYA-4609 / CBS 101355 / FGSC A1100 / Af293) (Neosartorya fumigata).